We begin with the raw amino-acid sequence, 702 residues long: Elongation factor G (702 aa).

The tr-type G domain maps to 8–290; the sequence is ERYRNIGISA…AVIDYLPSPV (283 aa). Residues 17–24, 88–92, and 142–145 each bind GTP; these read AHIDAGKT, DTPGH, and NKMD.

Belongs to the TRAFAC class translation factor GTPase superfamily. Classic translation factor GTPase family. EF-G/EF-2 subfamily.

It is found in the cytoplasm. Catalyzes the GTP-dependent ribosomal translocation step during translation elongation. During this step, the ribosome changes from the pre-translocational (PRE) to the post-translocational (POST) state as the newly formed A-site-bound peptidyl-tRNA and P-site-bound deacylated tRNA move to the P and E sites, respectively. Catalyzes the coordinated movement of the two tRNA molecules, the mRNA and conformational changes in the ribosome. The polypeptide is Elongation factor G (Acidovorax ebreus (strain TPSY) (Diaphorobacter sp. (strain TPSY))).